Here is a 304-residue protein sequence, read N- to C-terminus: Oxidoreductase calM (304 aa).

Positions 26, 45, 68, and 98 each coordinate NADP(+). Catalysis depends on Ser-152, which acts as the Proton donor. Positions 166, 170, 200, and 202 each coordinate NADP(+). Catalysis depends on Tyr-166, which acts as the Proton acceptor. The Lowers pKa of active site Tyr role is filled by Lys-170.

Belongs to the short-chain dehydrogenases/reductases (SDR) family.

It participates in secondary metabolite biosynthesis. Oxidoreductase; part of the gene cluster that mediates the biosynthesis of calbistrin A and related compounds. Calbistrin A is a secondary metabolite with an interesting structure that was recently found to have bioactivity against leukemia cells. It consists of two polyketides linked by an ester bond: a bicyclic decalin containing polyketide and a linear 12 carbon dioic acid structure. The polyketide synthase calA is probably responsible for forming the decalin moiety. Because calA lacks a designated enoylreductase (ER) domain, the required activity is provided by the trans-enoyl reductase calK. Following release from the PKS, calF then probably catalyzes the oxidation and the subsequent Diels Alder cycloisomerization that lead to the formation of the decalin moiety. The decalin polyketide backbone includes two C-methyl groups, at C7 and C11 in backbone, of which the C7 position is probably methylated by the methyltransferase domain of calA. A candidate for adding the methyl group at C11, if not done by CalA, is the cluster methyltransferase calH. Several additional tailoring enzymes within the cluster could be involved in the modification of the decalin polyketide product. Those include the 3 cytochrome P450 monooxygenases CalE, CalG and CalL, of which one might be responsible for the introduction of the extra hydroxyl group attached to the backbone of the decalin moiety, at position C9 in the backbone, that allows for attachment of the linear moiety. One tailoring enzyme activity that is expected to be involved in biosynthesis of calbistrin is an acyltransferase for connecting the two polyketide synthase products, and which could be performed by the cluster acyltransferase calJ. The enzyme responsible for the biosynthesis of the linear moiety, probably a second PKS, has not been identified yet. The chain is Oxidoreductase calM from Penicillium decumbens.